A 407-amino-acid polypeptide reads, in one-letter code: Zinc finger protein 552 (407 aa).

A KRAB domain is found at 14–90; sequence VTFEDVAVKF…PMAGVSPKKA (77 aa). Residues 91–113 form a C2H2-type 1 zinc finger; that stretch reads HPCEMCGPILGDILHVADHQGTH. The segment at 119-141 adopts a C2H2-type 2; degenerate zinc-finger fold; sequence HRCEAWGNKLYDSGNFHQHQNEH. Residues K176 and K198 each participate in a glycyl lysine isopeptide (Lys-Gly) (interchain with G-Cter in SUMO2) cross-link. A C2H2-type 3; degenerate zinc finger spans residues 212-234; that stretch reads YSCGGCMKHFSTKDILSQHERLL. A C2H2-type 4; degenerate zinc finger spans residues 244 to 262; it reads ECGKSSSKYDSFSNHQGVH. Glycyl lysine isopeptide (Lys-Gly) (interchain with G-Cter in SUMO2) cross-links involve residues K251 and K266. C2H2-type zinc fingers lie at residues 268–290, 296–318, 324–346, 352–374, and 380–402; these read YTCG…QRIH, YECE…QRVH, YECS…KRVH, YECS…RRVH, and YGCS…QRVH. Residue K308 forms a Glycyl lysine isopeptide (Lys-Gly) (interchain with G-Cter in SUMO2) linkage.

This sequence belongs to the krueppel C2H2-type zinc-finger protein family.

The protein localises to the nucleus. May be involved in transcriptional regulation. This is Zinc finger protein 552 (ZNF552) from Homo sapiens (Human).